The primary structure comprises 96 residues: Acetolactate synthase isozyme 1 small subunit (96 aa).

Residues 10 to 83 form the ACT domain; that stretch reads ILELTVRNHP…DVVKVQRNQS (74 aa).

Belongs to the acetolactate synthase small subunit family. In terms of assembly, dimer of large and small chains.

It catalyses the reaction 2 pyruvate + H(+) = (2S)-2-acetolactate + CO2. The protein operates within amino-acid biosynthesis; L-isoleucine biosynthesis; L-isoleucine from 2-oxobutanoate: step 1/4. It functions in the pathway amino-acid biosynthesis; L-valine biosynthesis; L-valine from pyruvate: step 1/4. This is Acetolactate synthase isozyme 1 small subunit (ilvN) from Escherichia coli O157:H7.